Consider the following 624-residue polypeptide: Multicopper oxidase elcG (624 aa).

A signal peptide spans 1 to 18 (MACNILNFLTGLLSLSST). 2 Plastocyanin-like domains span residues 48–160 (PGRA…IERG) and 216–373 (CMDA…TIRI). The N-linked (GlcNAc...) asparagine glycan is linked to Asn-65. Residues His-96, His-98, His-140, and His-142 each coordinate Cu cation. N-linked (GlcNAc...) asparagine glycosylation is found at Asn-271, Asn-296, and Asn-464. The 130-residue stretch at 474–603 (FLFQDPSQIE…GGMGVVILDG (130 aa)) folds into the Plastocyanin-like 3 domain. Cu cation contacts are provided by His-511, His-514, His-516, His-585, Cys-586, His-587, and His-591.

It belongs to the multicopper oxidase family.

The protein operates within secondary metabolite biosynthesis. Functionally, multicopper oxidase; part of the gene cluster that mediates the biosynthesis of elsinochrome C, a perelyenequinone phytotoxin structurally similar to cercosporin. The first step of elsinochrome C biosynthesis is performed by the polyketide synthase elcA which catalyzes the formation of nor-toralactone. The starter unit acyltransferase (SAT) domain of elcA initiates polyketide extension by the selective utilization of acetyl-CoA, which is elongated to the heptaketide in the beta-ketoacyl synthase (KS) domain by successive condensations with six malonyl units introduced by the malonyl acyltransferase (MAT) domain. The product template (PT) domain catalyzes C4-C9 and C2-C11 aldol cyclizations and dehydrations to a trihydroxynaphthalene, which is thought to be delivered to the thioesterase (TE) domain for product release. The bifunctional enzyme elcB then methylates nor-toralactone to toralactone before conducting an unusual oxidative aromatic ring opening. The next step in perylenequinone biosynthesis is an O-methylation at the nascent OH-6 of the elcB product performed by the O-methyltransferase elcD. The oxidative coupling of the two monomeric naphthol units in perylenequinone biosynthesis is catalyzed by the FAD-dependent monooxygenase elcE and the multicopper oxidase elcG. ElcG might catalyze the first intermolecular coupling in a regio- and stereo-selective manner via a phenol radical coupling mechanism and the elcE could forge the second C-C bond intramolecularly via a hydride transfer mechanism. The fasciclin domain-containing protein elcF might also play a role duting this step. The last piece of the puzzle in the biosynthesis of elsinochrome C is the additional annulation by enolate coupling to afford the dihydrobenzo(ghi)perylenequinone system, catalyzed by the FAD-dependent monooxygenase elcH. This chain is Multicopper oxidase elcG, found in Phaeosphaeria nodorum (strain SN15 / ATCC MYA-4574 / FGSC 10173) (Glume blotch fungus).